The following is a 100-amino-acid chain: Large ribosomal subunit protein uL23 (100 aa).

Belongs to the universal ribosomal protein uL23 family. Part of the 50S ribosomal subunit. Contacts protein L29, and trigger factor when it is bound to the ribosome.

Its function is as follows. One of the early assembly proteins it binds 23S rRNA. One of the proteins that surrounds the polypeptide exit tunnel on the outside of the ribosome. Forms the main docking site for trigger factor binding to the ribosome. This is Large ribosomal subunit protein uL23 from Shigella dysenteriae serotype 1 (strain Sd197).